We begin with the raw amino-acid sequence, 468 residues long: ERO1-like protein alpha (468 aa).

Positions 1–23 (MGHRWGFLIVFLGAVGLLGSGYG) are cleaved as a signal peptide. Cystine bridges form between C35–C48, C37–C46, C85–C391, C94–C99, C94–C131, C99–C104, C208–C241, and C394–C397. S106, S143, and S145 each carry phosphoserine. R187, T189, and W200 together coordinate FAD. FAD is bound by residues S252 and H255. A glycan (N-linked (GlcNAc...) asparagine) is linked at N280. FAD-binding residues include R287 and R300. N384 carries N-linked (GlcNAc...) asparagine glycosylation.

This sequence belongs to the EROs family. In terms of assembly, predominantly monomer. May function both as a monomer and a homodimer. Interacts with PDILT. Interacts with ERP44; the interaction results in retention of ERO1A in the endoplasmic reticulum. FAD serves as cofactor. The Cys-94/Cys-99 and Cys-394/Cys-397 disulfide bonds constitute the redox-active center. The Cys-94/Cys-99 disulfide bond may accept electron from P4HB and funnel them to the active site disulfide Cys-394/Cys-397. The regulatory Cys-99/Cys-104 disulfide bond stabilizes the other regulatory bond Cys-94/Cys-131. Post-translationally, phosphorylated on Ser-145 by FAM20C in the Golgi which increases its enzymatic activity. Phosphorylation is induced by lactation. It is also induced by hypoxia and reductive stress.

The protein resides in the endoplasmic reticulum membrane. Its subcellular location is the golgi apparatus lumen. It is found in the secreted. It localises to the cell projection. The protein localises to the dendrite. With respect to regulation, enzyme activity is tightly regulated to prevent the accumulation of reactive oxygen species in the endoplasmic reticulum. Reversibly down-regulated by the formation of disulfide bonds between the active site Cys-94 and Cys-131, and between Cys-99 and Cys-104. Glutathione may be required to regulate its activity in the endoplasmic reticulum. Functionally, oxidoreductase involved in disulfide bond formation in the endoplasmic reticulum. Efficiently reoxidizes P4HB/PDI, the enzyme catalyzing protein disulfide formation, in order to allow P4HB to sustain additional rounds of disulfide formation. Following P4HB reoxidation, passes its electrons to molecular oxygen via FAD, leading to the production of reactive oxygen species (ROS) in the cell. Required for the proper folding of immunoglobulins. Plays an important role in ER stress-induced, CHOP-dependent apoptosis by activating the inositol 1,4,5-trisphosphate receptor IP3R1. The polypeptide is ERO1-like protein alpha (Sus scrofa (Pig)).